A 258-amino-acid polypeptide reads, in one-letter code: Cytochrome P450 1A2 (258 aa).

The protein belongs to the cytochrome P450 family. It depends on heme as a cofactor.

Its subcellular location is the endoplasmic reticulum membrane. The protein localises to the microsome membrane. It catalyses the reaction an organic molecule + reduced [NADPH--hemoprotein reductase] + O2 = an alcohol + oxidized [NADPH--hemoprotein reductase] + H2O + H(+). Functionally, cytochromes P450 are a group of heme-thiolate monooxygenases. In liver microsomes, this enzyme is involved in an NADPH-dependent electron transport pathway. It oxidizes a variety of structurally unrelated compounds, including steroids, fatty acids, and xenobiotics. In Gallus gallus (Chicken), this protein is Cytochrome P450 1A2 (CYP1A2).